The sequence spans 941 residues: Isoleucine--tRNA ligase (941 aa).

The 'HIGH' region signature appears at 58 to 68; that stretch reads PYANGNIHIGH. Glu-564 serves as a coordination point for L-isoleucyl-5'-AMP. Positions 605 to 609 match the 'KMSKS' region motif; the sequence is KMSKS. Lys-608 contributes to the ATP binding site. The Zn(2+) site is built by Cys-904, Cys-907, Cys-924, and Cys-927.

The protein belongs to the class-I aminoacyl-tRNA synthetase family. IleS type 1 subfamily. In terms of assembly, monomer. The cofactor is Zn(2+).

It is found in the cytoplasm. It catalyses the reaction tRNA(Ile) + L-isoleucine + ATP = L-isoleucyl-tRNA(Ile) + AMP + diphosphate. Catalyzes the attachment of isoleucine to tRNA(Ile). As IleRS can inadvertently accommodate and process structurally similar amino acids such as valine, to avoid such errors it has two additional distinct tRNA(Ile)-dependent editing activities. One activity is designated as 'pretransfer' editing and involves the hydrolysis of activated Val-AMP. The other activity is designated 'posttransfer' editing and involves deacylation of mischarged Val-tRNA(Ile). This chain is Isoleucine--tRNA ligase, found in Buchnera aphidicola subsp. Cinara cedri (strain Cc).